Reading from the N-terminus, the 307-residue chain is L-lactate dehydrogenase (307 aa).

NAD(+) contacts are provided by residues Val-13, Asp-34, Arg-39, Tyr-64, and 78 to 79 (GV). Position 87 (Arg-87) interacts with substrate. Residue Ser-100 participates in NAD(+) binding. 119 to 122 (NPVD) is a binding site for substrate. Thr-142 contributes to the NAD(+) binding site. A substrate-binding site is contributed by 147-150 (DSAR). Catalysis depends on His-174, which acts as the Proton acceptor. A substrate-binding site is contributed by Thr-224.

It belongs to the LDH/MDH superfamily. LDH family. As to quaternary structure, homotetramer.

It localises to the cytoplasm. It carries out the reaction (S)-lactate + NAD(+) = pyruvate + NADH + H(+). Its pathway is fermentation; pyruvate fermentation to lactate; (S)-lactate from pyruvate: step 1/1. Catalyzes the conversion of lactate to pyruvate. This chain is L-lactate dehydrogenase, found in Lactobacillus delbrueckii subsp. bulgaricus (strain ATCC BAA-365 / Lb-18).